A 456-amino-acid chain; its full sequence is Probable glycine dehydrogenase (decarboxylating) subunit 1 (456 aa).

It belongs to the GcvP family. N-terminal subunit subfamily. In terms of assembly, the glycine cleavage system is composed of four proteins: P, T, L and H. In this organism, the P 'protein' is a heterodimer of two subunits.

It carries out the reaction N(6)-[(R)-lipoyl]-L-lysyl-[glycine-cleavage complex H protein] + glycine + H(+) = N(6)-[(R)-S(8)-aminomethyldihydrolipoyl]-L-lysyl-[glycine-cleavage complex H protein] + CO2. Functionally, the glycine cleavage system catalyzes the degradation of glycine. The P protein binds the alpha-amino group of glycine through its pyridoxal phosphate cofactor; CO(2) is released and the remaining methylamine moiety is then transferred to the lipoamide cofactor of the H protein. In Legionella pneumophila (strain Paris), this protein is Probable glycine dehydrogenase (decarboxylating) subunit 1.